Here is a 515-residue protein sequence, read N- to C-terminus: GMP synthase [glutamine-hydrolyzing] (515 aa).

The 191-residue stretch at 10-200 (TIIVLDFGSQ…VFGVCGCSEG (191 aa)) folds into the Glutamine amidotransferase type-1 domain. Residue cysteine 87 is the Nucleophile of the active site. Catalysis depends on residues histidine 174 and glutamate 176. The 190-residue stretch at 201–390 (WNMENFIEVE…LGIPDEIVWR (190 aa)) folds into the GMPS ATP-PPase domain. Residue 228-234 (SGGVDSS) coordinates ATP.

Homodimer.

It carries out the reaction XMP + L-glutamine + ATP + H2O = GMP + L-glutamate + AMP + diphosphate + 2 H(+). The protein operates within purine metabolism; GMP biosynthesis; GMP from XMP (L-Gln route): step 1/1. Functionally, catalyzes the synthesis of GMP from XMP. The protein is GMP synthase [glutamine-hydrolyzing] of Bacillus anthracis (strain A0248).